The chain runs to 396 residues: Pinosylvin synthase 2 (396 aa).

Residue 60–63 (KFKR) coordinates substrate. Residue C170 is part of the active site. Substrate-binding positions include L273 and 311-313 (GGR).

Belongs to the thiolase-like superfamily. Chalcone/stilbene synthases family. In terms of assembly, homodimer.

The protein localises to the cytoplasm. It catalyses the reaction (E)-cinnamoyl-CoA + 3 malonyl-CoA + 3 H(+) = (E)-pinosylvin + 4 CO2 + 4 CoA. The catalysed reaction is 3-phenylpropanoyl-CoA + 3 malonyl-CoA + 3 H(+) = dihydropinosylvin + 4 CO2 + 4 CoA. Its pathway is phytoalexin biosynthesis; pinosylvin biosynthesis. In terms of biological role, catalyzes the production of pinosylvin from cinnamoyl-CoA and malonyl-CoA, and dihydropinosylvin from dihydrocinnamoyl-CoA. The sequence is that of Pinosylvin synthase 2 from Pinus strobus (Eastern white pine).